The primary structure comprises 312 residues: Ribosomal RNA small subunit methyltransferase H (312 aa).

S-adenosyl-L-methionine is bound by residues Gly33–His35, Asp53, Phe80, Asp102, and Gln109.

It belongs to the methyltransferase superfamily. RsmH family.

The protein localises to the cytoplasm. It carries out the reaction cytidine(1402) in 16S rRNA + S-adenosyl-L-methionine = N(4)-methylcytidine(1402) in 16S rRNA + S-adenosyl-L-homocysteine + H(+). Its function is as follows. Specifically methylates the N4 position of cytidine in position 1402 (C1402) of 16S rRNA. The protein is Ribosomal RNA small subunit methyltransferase H of Heliobacterium mobile (Heliobacillus mobilis).